Here is a 1062-residue protein sequence, read N- to C-terminus: Protein P1-P2 (1062 aa).

The signal sequence occupies residues 1-20; that stretch reads MNRFTAYAALFFMFSLCSTA. 3 consecutive transmembrane segments (helical) span residues 121 to 141, 144 to 164, and 172 to 192; these read AASV…WTLA, ITLF…LGCI, and ALSL…KIIW. Positions 207–399 constitute a Peptidase S39 domain; sequence VEGYKGFSVP…GITSPNYVFE (193 aa). Catalysis depends on for protease activity residues His-255, Asp-286, and Ser-354. The tract at residues 455–560 is disordered; the sequence is ATNAPAEKTA…QTKEARKAWR (106 aa). A compositionally biased stretch (polar residues) spans 463-484; it reads TAQTNSAEKTAPSTSAEKTALT. Positions 497-511 are enriched in basic residues; that stretch reads QNKRQLRHPRRRYKR. A compositionally biased stretch (basic and acidic residues) spans 551–560; that stretch reads QTKEARKAWR. Residues 859-974 form the RdRp catalytic domain; sequence EYTRPTDCSG…APNSDLEEYK (116 aa).

Specific enzymatic cleavages in vivo yield mature proteins. The protease probably cleaves itself and releases the RdRp (Potential). Cleavages have been shown in the P1 protein, but since the N-terminus containing the serine protease is shared between P1 and P1-P2, cleavages should also occur within the P1-P2 protein.

Its subcellular location is the membrane. The catalysed reaction is RNA(n) + a ribonucleoside 5'-triphosphate = RNA(n+1) + diphosphate. In terms of biological role, precursor from which the RNA-dependent RNA polymerase (RdRp) is probably released. RNA-dependent RNA polymerase plays an essential role in virus replication (Potential). This Potato leafroll virus (strain Potato/Scotland/strain 1/1984) (PLrV) protein is Protein P1-P2.